We begin with the raw amino-acid sequence, 460 residues long: Armadillo repeat-containing protein LFR (460 aa).

Positions 1–10 are enriched in low complexity; it reads MSHVRSAPAG. The segment at 1 to 32 is disordered; sequence MSHVRSAPAGKSGGGGGSTPAKRGRPFGSTTG. 3 ARM repeats span residues 225–267, 321–360, and 364–405; these read ENET…NLAP, NEPFLLPAIPQIYKRLVDLLSVPAVDAQAAAISALYNVAE, and DFRL…SLVS.

Interacts with CHR719, SWI3A and SWI3C. Expressed at low levels in coleoptiles, leaf tongues, mature leaves and nodes during the vegetative phase. Highly expressed in reproductive tissues such as young panicles, early developing seeds, embryos and endosperms.

The protein localises to the nucleus. In terms of biological role, plays critical roles in both embryo and endosperm development. Required for free nuclei division and cellularization in early endosperm development, by preventing premature cell death in the endosperm. Involved in the regulation of pattern formation and organ differentiation during embryogenesis, by regulating genes involved in the early stages of seed development. This chain is Armadillo repeat-containing protein LFR, found in Oryza sativa subsp. japonica (Rice).